Reading from the N-terminus, the 287-residue chain is ATP synthase gamma chain (287 aa).

This sequence belongs to the ATPase gamma chain family. F-type ATPases have 2 components, CF(1) - the catalytic core - and CF(0) - the membrane proton channel. CF(1) has five subunits: alpha(3), beta(3), gamma(1), delta(1), epsilon(1). CF(0) has three main subunits: a, b and c.

It localises to the cell inner membrane. Functionally, produces ATP from ADP in the presence of a proton gradient across the membrane. The gamma chain is believed to be important in regulating ATPase activity and the flow of protons through the CF(0) complex. The polypeptide is ATP synthase gamma chain (Enterobacter sp. (strain 638)).